The chain runs to 1948 residues: [F-actin]-monooxygenase MICAL2 (1948 aa).

Positions 2–494 (GENEDEKQAQ…KHLYITKEMD (493 aa)) are monooxygenase domain. FAD is bound by residues Cys97, 116–118 (EKR), 123–125 (RNN), Phe183, Tyr298, and Asp398. In terms of domain architecture, Calponin-homology (CH) spans 516–619 (DIRPNKLLTW…MVMYLSKFYE (104 aa)). The residue at position 631 (Ser631) is a Phosphoserine. The Nuclear localization signal motif lies at 660-681 (RKRTPRVDAQTEENDVNKRRRQ). Disordered regions lie at residues 664-709 (PRVD…ESGN), 753-776 (SRPPGTSHCPKLEESTPRLPPPLK), and 891-923 (KRVPHAHPPSPPSCLPSPDPAAAPSPPAADSVS). Residues 693-709 (SSRSLGSSQEYAKESGN) are compositionally biased toward polar residues. Over residues 896–917 (AHPPSPPSCLPSPDPAAAPSPP) the composition is skewed to pro residues. One can recognise an LIM zinc-binding domain in the interval 980–1042 (DTCYFCKKRV…KLHFAHCKTS (63 aa)). Zn(2+) contacts are provided by Cys982, Cys985, His1003, Cys1006, Cys1009, Cys1012, Cys1032, and His1035. Disordered stretches follow at residues 1045-1134 (QRKR…GQDG), 1146-1185 (SEDSSSDTESDSGSIIGPCTEACEERPRLPESPPLSQPLT), and 1233-1298 (QSNS…DDVS). Residues 1050 to 1059 (AELNQQREEE) are compositionally biased toward basic and acidic residues. Residues 1233–1243 (QSNSTPMNQRA) are compositionally biased toward polar residues. Over residues 1254-1271 (SSSSSPSLPSSFSSASVP) the composition is skewed to low complexity. The segment covering 1277 to 1292 (DSSSPQVTYNLHSPQI) has biased composition (polar residues). The interval 1300-1339 (TPIYLRRARAQGITKEIPLYLPHSPMLESTEHCLVSPDGE) is interaction with MAPK1. 4 disordered regions span residues 1478–1505 (QKKALGETRTPAAKAPREREVPPPKSPL), 1519–1622 (SSEA…SSKV), 1672–1726 (GDFF…QAGK), and 1739–1767 (SGPGAPVTEDTSSPTSSSAEEDVETQLSS). A compositionally biased stretch (basic and acidic residues) spans 1522 to 1534 (AGKKTSSKPETKT). The span at 1570–1579 (KASAFFSLAS) shows a compositional bias: low complexity. Residues 1580 to 1591 (PTSKAAQASDLS) are compositionally biased toward polar residues. The segment covering 1672–1682 (GDFFNSPKEKG) has biased composition (basic and acidic residues). Ser1677 is modified (phosphoserine). Composition is skewed to polar residues over residues 1698 to 1715 (VDSTSMGQVAHPSSTGQD) and 1747 to 1756 (EDTSSPTSSS). A bMERB domain is found at 1786–1936 (KQEELKRLHK…ERTQDQHFEN (151 aa)).

It belongs to the Mical family. As to quaternary structure, interacts with PLXNA4. Interacts with RAB1B. Interacts with MAPK1/ERK2. Interacts with RAB35, RAB8A, RAB10, RAB13 and RAB15 (in their GTP-bound forms); binding to RAB35 is of low affinity compared to other Rab proteins; at least in case of RAB8A may bind 2 molecules of RAB8A simultaneously through a high and a low affinity binding site, respectively. May interact with MAPK1/ERK2. FAD is required as a cofactor.

Its subcellular location is the nucleus. The protein resides in the cytoplasm. It carries out the reaction L-methionyl-[F-actin] + NADPH + O2 + H(+) = L-methionyl-(R)-S-oxide-[F-actin] + NADP(+) + H2O. Its function is as follows. Methionine monooxygenase that promotes depolymerization of F-actin by mediating oxidation of residues 'Met-44' and 'Met-47' on actin to form methionine-sulfoxide, resulting in actin filament disassembly and preventing repolymerization. Regulates the disassembly of branched actin networks also by oxidizing ARP3B-containing ARP2/3 complexes leading to ARP3B dissociation from the network. Acts as a key regulator of the SRF signaling pathway elicited by nerve growth factor and serum: mediates oxidation and subsequent depolymerization of nuclear actin, leading to increase MKL1/MRTF-A presence in the nucleus and promote SRF:MKL1/MRTF-A-dependent gene transcription. Does not activate SRF:MKL1/MRTF-A through RhoA. This is [F-actin]-monooxygenase MICAL2 from Rattus norvegicus (Rat).